The primary structure comprises 248 residues: Tetraspanin-17 (248 aa).

The Cytoplasmic portion of the chain corresponds to 1-7 (MSEVRTG). A helical transmembrane segment spans residues 8–28 (FLTMTTIILISIGLTMMGTGL). Residues 29–44 (YQKTTMSSCIRETSSQ) are Extracellular-facing. The chain crosses the membrane as a helical span at residues 45 to 65 (FTLLGLLLLLIPQIGLYGICC). Residues 66–69 (RSKR) are Cytoplasmic-facing. The helical transmembrane segment at 70 to 90 (LFNFFFYGMVVLIIIVSYYSI) threads the bilayer. At 91–210 (KCSIYNTTFG…ILKAIVHQWK (120 aa)) the chain is on the extracellular side. N-linked (GlcNAc...) asparagine glycans are attached at residues N96, N109, and N141. A helical membrane pass occupies residues 211–231 (YLSMFAYPALVLSCISLAIAW). The Cytoplasmic portion of the chain corresponds to 232–248 (SLKETIHENEDYRGSYS).

Belongs to the tetraspanin (TM4SF) family.

It localises to the membrane. Functionally, may be involved in the regulation of cell differentiation. The sequence is that of Tetraspanin-17 (TET17) from Arabidopsis thaliana (Mouse-ear cress).